The sequence spans 340 residues: Ketol-acid reductoisomerase (NADP(+)) (340 aa).

The KARI N-terminal Rossmann domain maps to 3-182 (VQMEYEKDVK…GAARVGLLET (180 aa)). NADP(+)-binding positions include 26-29 (YGSQ), arginine 49, serine 53, and 83-86 (DEIQ). The active site involves histidine 108. Glycine 134 is a binding site for NADP(+). A KARI C-terminal knotted domain is found at 183-328 (TYKEETEEDL…AELRKAMPFV (146 aa)). Positions 191, 195, 227, and 231 each coordinate Mg(2+). A substrate-binding site is contributed by serine 252.

This sequence belongs to the ketol-acid reductoisomerase family. The cofactor is Mg(2+).

It catalyses the reaction (2R)-2,3-dihydroxy-3-methylbutanoate + NADP(+) = (2S)-2-acetolactate + NADPH + H(+). The catalysed reaction is (2R,3R)-2,3-dihydroxy-3-methylpentanoate + NADP(+) = (S)-2-ethyl-2-hydroxy-3-oxobutanoate + NADPH + H(+). It participates in amino-acid biosynthesis; L-isoleucine biosynthesis; L-isoleucine from 2-oxobutanoate: step 2/4. The protein operates within amino-acid biosynthesis; L-valine biosynthesis; L-valine from pyruvate: step 2/4. In terms of biological role, involved in the biosynthesis of branched-chain amino acids (BCAA). Catalyzes an alkyl-migration followed by a ketol-acid reduction of (S)-2-acetolactate (S2AL) to yield (R)-2,3-dihydroxy-isovalerate. In the isomerase reaction, S2AL is rearranged via a Mg-dependent methyl migration to produce 3-hydroxy-3-methyl-2-ketobutyrate (HMKB). In the reductase reaction, this 2-ketoacid undergoes a metal-dependent reduction by NADPH to yield (R)-2,3-dihydroxy-isovalerate. The protein is Ketol-acid reductoisomerase (NADP(+)) of Streptococcus pneumoniae (strain Hungary19A-6).